Here is a 625-residue protein sequence, read N- to C-terminus: Interferon-induced GTP-binding protein MxE (625 aa).

In terms of domain architecture, Dynamin-type G spans 40–313 (DLNLPAIAVI…LVEHIAKNLP (274 aa)). The tract at residues 50–57 (GDQSSGKS) is G1 motif. 50-57 (GDQSSGKS) provides a ligand contact to GTP. The G2 motif stretch occupies residues 75–77 (VTR). The tract at residues 151–154 (DLPG) is G3 motif. Residues 151–155 (DLPGI) and 220–223 (TKPD) each bind GTP. The tract at residues 220-223 (TKPD) is G4 motif. The segment at 252-255 (KCRG) is G5 motif. Residues 536–625 (VREMAYHLTS…RVLSKFVHSA (90 aa)) form the GED domain.

Belongs to the TRAFAC class dynamin-like GTPase superfamily. Dynamin/Fzo/YdjA family.

The protein localises to the cytoplasm. This Danio rerio (Zebrafish) protein is Interferon-induced GTP-binding protein MxE (mxe).